The following is a 394-amino-acid chain: Elongation factor Tu (394 aa).

The region spanning 10–204 (KPHVNVGTIG…AMDDYIPAPE (195 aa)) is the tr-type G domain. Residues 19–26 (GHVDHGKT) form a G1 region. 19–26 (GHVDHGKT) contacts GTP. Residue Thr-26 participates in Mg(2+) binding. The interval 60–64 (GITIN) is G2. The G3 stretch occupies residues 81 to 84 (DCPG). Residues 81–85 (DCPGH) and 136–139 (NKCD) contribute to the GTP site. Residues 136-139 (NKCD) are G4. The tract at residues 174–176 (SAL) is G5.

The protein belongs to the TRAFAC class translation factor GTPase superfamily. Classic translation factor GTPase family. EF-Tu/EF-1A subfamily. In terms of assembly, monomer.

The protein resides in the cytoplasm. The enzyme catalyses GTP + H2O = GDP + phosphate + H(+). Functionally, GTP hydrolase that promotes the GTP-dependent binding of aminoacyl-tRNA to the A-site of ribosomes during protein biosynthesis. This chain is Elongation factor Tu, found in Francisella tularensis subsp. tularensis (strain FSC 198).